A 170-amino-acid chain; its full sequence is MKGSRIELGDVTPHNIKQLKRLNQVIFPVSYNDKFYKDVLEVGELAKLAYFNDIAVGAVCCRVDHSQNQKRLYIMTLGCLAPYRRLGIGTKMLNHVLNICEKDGTFDNIYLHVQISNESAIDFYRKFGFEIIETKKNYYKRIEPADAHVLQKNLKISSPGQNADVQKSEN.

One can recognise an N-acetyltransferase domain in the interval 6–155 (IELGDVTPHN…DAHVLQKNLK (150 aa)). Residue Y31 participates in substrate binding. Y73 is a catalytic residue. Substrate is bound at residue M75. Residue 77–90 (LGCLAPYRRLGIGT) participates in acetyl-CoA binding. 79–90 (CLAPYRRLGIGT) is a CoA binding site. Residue H112 is part of the active site. Position 117-126 (117-126 (NESAIDFYRK)) interacts with CoA. Residues 138–141 (YYKR) form a substrate region.

The protein belongs to the acetyltransferase family. GNAT subfamily.

It is found in the cytoplasm. The protein localises to the nucleus. The catalysed reaction is N-terminal L-methionyl-L-alanyl-[protein] + acetyl-CoA = N-terminal N(alpha)-acetyl-L-methionyl-L-alanyl-[protein] + CoA + H(+). It carries out the reaction N-terminal L-methionyl-L-seryl-[protein] + acetyl-CoA = N-terminal N(alpha)-acetyl-L-methionyl-L-seryl-[protein] + CoA + H(+). It catalyses the reaction N-terminal L-methionyl-L-valyl-[protein] + acetyl-CoA = N-terminal N(alpha)-acetyl-L-methionyl-L-valyl-[protein] + CoA + H(+). The enzyme catalyses N-terminal L-methionyl-L-threonyl-[protein] + acetyl-CoA = N-terminal N(alpha)-acetyl-L-methionyl-L-threonyl-[protein] + CoA + H(+). The catalysed reaction is N-terminal L-methionyl-L-lysyl-[protein] + acetyl-CoA = N-terminal N(alpha)-acetyl-L-methionyl-L-lysyl-[protein] + CoA + H(+). It carries out the reaction N-terminal L-methionyl-L-leucyl-[protein] + acetyl-CoA = N-terminal N(alpha)-acetyl-L-methionyl-L-leucyl-[protein] + CoA + H(+). It catalyses the reaction N-terminal L-methionyl-L-phenylalanyl-[protein] + acetyl-CoA = N-terminal N(alpha)-acetyl-L-methionyl-L-phenylalanyl-[protein] + CoA + H(+). The enzyme catalyses N-terminal L-methionyl-L-tyrosyl-[protein] + acetyl-CoA = N-terminal N(alpha)-acetyl-L-methionyl-L-tyrosyl-[protein] + CoA + H(+). In terms of biological role, N-alpha-acetyltransferase that acetylates the N-terminus of proteins that retain their initiating methionine. Has a broad substrate specificity: able to acetylate the initiator methionine of most peptides, except for those with a proline in second position. Also displays N-epsilon-acetyltransferase activity by mediating acetylation of the side chain of specific lysines on proteins. The relevance of N-epsilon-acetyltransferase activity is however unclear. Required for sister chromatid cohesion during mitosis by promoting binding of CDCA5/sororin to cohesin. In Xenopus laevis (African clawed frog), this protein is N-alpha-acetyltransferase 50 (naa50).